The following is a 93-amino-acid chain: uncharacterized protein (93 aa).

Positions 41–62 (RSANRIPTTSSTSTSGTIPTTT) are disordered. Over residues 46–62 (IPTTSSTSTSGTIPTTT) the composition is skewed to low complexity.

This is an uncharacterized protein from Dictyostelium discoideum (Social amoeba).